We begin with the raw amino-acid sequence, 107 residues long: MRNAFTLLFETIEERKNNPLPQSYTNYLFSKGEDKILKKIGEECSEVIIASKNNDNEELVKEMVDVLYHCFVLLAEKNIPLKDIMEEVTERNGKLSRVGDRREIDTL.

Belongs to the PRA-PH family.

It localises to the cytoplasm. It catalyses the reaction 1-(5-phospho-beta-D-ribosyl)-ATP + H2O = 1-(5-phospho-beta-D-ribosyl)-5'-AMP + diphosphate + H(+). The protein operates within amino-acid biosynthesis; L-histidine biosynthesis; L-histidine from 5-phospho-alpha-D-ribose 1-diphosphate: step 2/9. This Bacillus cereus (strain ZK / E33L) protein is Phosphoribosyl-ATP pyrophosphatase.